The chain runs to 239 residues: Large ribosomal subunit protein uL30 (239 aa).

The segment at 1–22 (MEGVMSEAPQSSIRKKEYEARM) is disordered.

It belongs to the universal ribosomal protein uL30 family.

The chain is Large ribosomal subunit protein uL30 (RPL7) from Encephalitozoon cuniculi (strain GB-M1) (Microsporidian parasite).